The chain runs to 142 residues: Galactose-6-phosphate isomerase subunit LacA (142 aa).

This sequence belongs to the LacAB/RpiB family. Heteromultimeric protein consisting of LacA and LacB.

The catalysed reaction is aldehydo-D-galactose 6-phosphate = keto-D-tagatose 6-phosphate. It functions in the pathway carbohydrate metabolism; D-galactose 6-phosphate degradation; D-tagatose 6-phosphate from D-galactose 6-phosphate: step 1/1. This is Galactose-6-phosphate isomerase subunit LacA from Staphylococcus aureus.